Here is a 412-residue protein sequence, read N- to C-terminus: B3 domain-containing protein Os02g0683500 (412 aa).

The disordered stretch occupies residues 1 to 87; sequence MEFTTSSRFS…GGGGGGGGEA (87 aa). Residues 30–65 are compositionally biased toward low complexity; the sequence is TATAEAAPAPTSSSSSPAHHAASASASASASGSSTP. Over residues 73–86 the composition is skewed to gly residues; it reads GASGSGGGGGGGGE. A DNA-binding region (TF-B3) is located at residues 96–200; it reads FDKVVTPSDV…RHRLFIDWKR (105 aa). The interval 374–412 is disordered; that stretch reads RLLELPPHHHHGAESSAASSPSSSSSSKRDAHSALDLDL. Positions 387–399 are enriched in low complexity; it reads ESSAASSPSSSSS. The segment covering 400–412 has biased composition (basic and acidic residues); the sequence is SKRDAHSALDLDL.

It localises to the nucleus. This Oryza sativa subsp. japonica (Rice) protein is B3 domain-containing protein Os02g0683500.